The primary structure comprises 367 residues: tRNA-specific 2-thiouridylase MnmA (367 aa).

ATP-binding positions include 12 to 19 (GMSGGVDS) and Met38. Residues 98 to 100 (NPD) are interaction with target base in tRNA. Residue Cys103 is the Nucleophile of the active site. An intrachain disulfide couples Cys103 to Cys200. Residue Gly128 coordinates ATP. An interaction with tRNA region spans residues 150–152 (KDQ). Residue Cys200 is the Cysteine persulfide intermediate of the active site. Residues 312-313 (RY) are interaction with tRNA.

The protein belongs to the MnmA/TRMU family. In terms of assembly, interacts with TusE.

Its subcellular location is the cytoplasm. It catalyses the reaction S-sulfanyl-L-cysteinyl-[protein] + uridine(34) in tRNA + AH2 + ATP = 2-thiouridine(34) in tRNA + L-cysteinyl-[protein] + A + AMP + diphosphate + H(+). Its function is as follows. Catalyzes the 2-thiolation of uridine at the wobble position (U34) of tRNA(Lys), tRNA(Glu) and tRNA(Gln), leading to the formation of s(2)U34, the first step of tRNA-mnm(5)s(2)U34 synthesis. Sulfur is provided by IscS, via a sulfur-relay system. Binds ATP and its substrate tRNAs. This chain is tRNA-specific 2-thiouridylase MnmA, found in Photorhabdus laumondii subsp. laumondii (strain DSM 15139 / CIP 105565 / TT01) (Photorhabdus luminescens subsp. laumondii).